Reading from the N-terminus, the 284-residue chain is Aldo-keto reductase MAV_3816 (284 aa).

The active-site Proton donor is Tyr59. The NADPH site is built by Leu199, Ile237, Arg239, Ser240, Ala241, Ser248, and Arg275.

Belongs to the aldo/keto reductase family.

This chain is Aldo-keto reductase MAV_3816, found in Mycobacterium avium (strain 104).